The sequence spans 636 residues: Chaperone protein HtpG (636 aa).

Residues 1–349 form an a; substrate-binding region; the sequence is MAKHQFQTEV…SEDLPLNVSR (349 aa). The segment at 350–562 is b; sequence EILQENRILA…ADAQMAAMAH (213 aa). The segment at 563 to 636 is c; sequence MFRAMGQAMP…RLSRITAKAL (74 aa).

This sequence belongs to the heat shock protein 90 family. In terms of assembly, homodimer.

It localises to the cytoplasm. Its function is as follows. Molecular chaperone. Has ATPase activity. This Aliarcobacter butzleri (strain RM4018) (Arcobacter butzleri) protein is Chaperone protein HtpG.